The primary structure comprises 552 residues: Scavenger receptor class B member 1 (552 aa).

Residues 1–11 are Cytoplasmic-facing; it reads MGCSAKARWAA. Residues 12–32 traverse the membrane as a helical segment; it reads GALGVAGLLCAVLGAVMIVMV. Topologically, residues 33–443 are extracellular; that stretch reads PSLIKQQVLK…LVLMPKVMHY (411 aa). Asn102, Asn108, Asn173, Asn212, Asn227, Asn255, Asn310, Asn330, and Asn383 each carry an N-linked (GlcNAc...) asparagine glycan. Cys251 and Cys384 are joined by a disulfide. Tyr393 and Val458 each carry phosphoserine. A helical membrane pass occupies residues 444–464; that stretch reads AQYVLLALGCVLLLVPVICQI. Cys462 carries S-palmitoyl cysteine lipidation. At 465–552 the chain is on the cytoplasmic side; it reads RSQVGAGQRA…GPSLGGGTGS (88 aa). A Phosphoserine modification is found at Thr493.

This sequence belongs to the CD36 family. The C-terminal region binds to PDZK1. As to quaternary structure, (Microbial infection) Interacts with hepatitis C virus E1:E2 glycoproteins. N-glycosylated. In terms of processing, the six cysteines of the extracellular domain are all involved in intramolecular disulfide bonds. As to expression, widely expressed.

The protein resides in the cell membrane. Its subcellular location is the membrane. It localises to the caveola. In terms of biological role, receptor for different ligands such as phospholipids, cholesterol ester, lipoproteins, phosphatidylserine and apoptotic cells. Receptor for HDL, mediating selective uptake of cholesteryl ether and HDL-dependent cholesterol efflux. Also facilitates the flux of free and esterified cholesterol between the cell surface and apoB-containing lipoproteins and modified lipoproteins, although less efficiently than HDL. May be involved in the phagocytosis of apoptotic cells, via its phosphatidylserine binding activity. Functionally, (Microbial infection) Acts as a receptor for hepatitis C virus in hepatocytes and appears to facilitate its cell entry. Binding between SCARB1 and the hepatitis C virus glycoprotein E2 is independent of the genotype of the viral isolate. (Microbial infection) Mediates uptake of M.fortuitum, E.coli and S.aureus. Its function is as follows. (Microbial infection) Facilitates the entry of human coronavirus SARS-CoV-2 by acting as an entry cofactor through HDL binding. The sequence is that of Scavenger receptor class B member 1 (SCARB1) from Homo sapiens (Human).